Reading from the N-terminus, the 382-residue chain is UDP-N-acetylglucosamine--N-acetylmuramyl-(pentapeptide) pyrophosphoryl-undecaprenol N-acetylglucosamine transferase (382 aa).

UDP-N-acetyl-alpha-D-glucosamine-binding positions include 11–13 (TGG), Asn-124, Arg-164, Ser-192, and Gln-314.

It belongs to the glycosyltransferase 28 family. MurG subfamily.

It localises to the cell membrane. It carries out the reaction di-trans,octa-cis-undecaprenyl diphospho-N-acetyl-alpha-D-muramoyl-L-alanyl-D-glutamyl-meso-2,6-diaminopimeloyl-D-alanyl-D-alanine + UDP-N-acetyl-alpha-D-glucosamine = di-trans,octa-cis-undecaprenyl diphospho-[N-acetyl-alpha-D-glucosaminyl-(1-&gt;4)]-N-acetyl-alpha-D-muramoyl-L-alanyl-D-glutamyl-meso-2,6-diaminopimeloyl-D-alanyl-D-alanine + UDP + H(+). It participates in cell wall biogenesis; peptidoglycan biosynthesis. Its function is as follows. Cell wall formation. Catalyzes the transfer of a GlcNAc subunit on undecaprenyl-pyrophosphoryl-MurNAc-pentapeptide (lipid intermediate I) to form undecaprenyl-pyrophosphoryl-MurNAc-(pentapeptide)GlcNAc (lipid intermediate II). The polypeptide is UDP-N-acetylglucosamine--N-acetylmuramyl-(pentapeptide) pyrophosphoryl-undecaprenol N-acetylglucosamine transferase (Deinococcus deserti (strain DSM 17065 / CIP 109153 / LMG 22923 / VCD115)).